A 119-amino-acid polypeptide reads, in one-letter code: Large ribosomal subunit protein uL18 (119 aa).

Belongs to the universal ribosomal protein uL18 family. As to quaternary structure, part of the 50S ribosomal subunit; part of the 5S rRNA/L5/L18/L25 subcomplex. Contacts the 5S and 23S rRNAs.

Its function is as follows. This is one of the proteins that bind and probably mediate the attachment of the 5S RNA into the large ribosomal subunit, where it forms part of the central protuberance. The chain is Large ribosomal subunit protein uL18 from Legionella pneumophila (strain Paris).